The chain runs to 193 residues: dTTP/UTP pyrophosphatase (193 aa).

Asp-70 functions as the Proton acceptor in the catalytic mechanism.

This sequence belongs to the Maf family. YhdE subfamily. The cofactor is a divalent metal cation.

It localises to the cytoplasm. The enzyme catalyses dTTP + H2O = dTMP + diphosphate + H(+). It carries out the reaction UTP + H2O = UMP + diphosphate + H(+). In terms of biological role, nucleoside triphosphate pyrophosphatase that hydrolyzes dTTP and UTP. May have a dual role in cell division arrest and in preventing the incorporation of modified nucleotides into cellular nucleic acids. This Ruminiclostridium cellulolyticum (strain ATCC 35319 / DSM 5812 / JCM 6584 / H10) (Clostridium cellulolyticum) protein is dTTP/UTP pyrophosphatase.